We begin with the raw amino-acid sequence, 66 residues long: Early E3 7.7 kDa protein (66 aa).

Residues N7 and N24 are each glycosylated (N-linked (GlcNAc...) asparagine; by host). A helical membrane pass occupies residues 44–64 (ITILIVIGILILSVILYFLFS).

It is found in the host nucleus membrane. This chain is Early E3 7.7 kDa protein, found in Human adenovirus B serotype 7 (HAdV-7).